A 138-amino-acid polypeptide reads, in one-letter code: Acidic phospholipase A2 VpaPLA2 (138 aa).

The signal sequence occupies residues 1–16 (MRTLWIVAVCLMGVEG). Intrachain disulfides connect cysteine 42/cysteine 131, cysteine 44/cysteine 60, cysteine 59/cysteine 111, cysteine 65/cysteine 138, cysteine 66/cysteine 104, cysteine 73/cysteine 97, and cysteine 91/cysteine 102. Ca(2+) is bound by residues tyrosine 43, glycine 45, and glycine 47. Residue histidine 63 is part of the active site. Aspartate 64 lines the Ca(2+) pocket. Residue aspartate 105 is part of the active site.

The protein belongs to the phospholipase A2 family. Group II subfamily. D49 sub-subfamily. Ca(2+) is required as a cofactor. As to expression, expressed by the venom gland.

It localises to the secreted. It carries out the reaction a 1,2-diacyl-sn-glycero-3-phosphocholine + H2O = a 1-acyl-sn-glycero-3-phosphocholine + a fatty acid + H(+). Snake venom phospholipase A2 (PLA2) that causes a sudden decrease of arterial blood pressure when injected into rat, but is not lethal. When co-injected with an uncharacterized basic protein (which did not show any enzymatic activity, but also causes a drop in blood pressure), this synergistical mixture is lethal. PLA2 catalyzes the calcium-dependent hydrolysis of the 2-acyl groups in 3-sn-phosphoglycerides. The sequence is that of Acidic phospholipase A2 VpaPLA2 from Daboia palaestinae (Palestine viper).